Here is a 365-residue protein sequence, read N- to C-terminus: MPSTTQTTVQSIDSIDSIPTTIKRRQNDKTKTPKTKPVSKIPICPKNSSIPRLDQPSQHKFILLQSLLPITVHQLTTLVLSISRYDDYVHPFLLRLCVIIGYGYAFRFLLRREGLAIRTLGKKLGYLDGDHHPRDKVPRDSTRLNWSLPLTVGSRTVMCVLVAYDPSQQPINYLASLKWWAWLAVYLSLYPIILDFYYYCVHRAWHEVPCLWRFHRRHHTIKRPSILFTAYADSEQELFDIVGTPLLTFFTLKALHLPMDFYTWWICIQYIAYTEVMGHSGLRIYTTPPISCSWLLQRFGVELVIEDHDLHHRQGYRQARNYGKQTRIWDRLFGTCADRIETNPVNIQKGRRVMMHSINIPSLGN.

The segment at 20–41 (TTIKRRQNDKTKTPKTKPVSKI) is disordered. A glycan (N-linked (GlcNAc...) asparagine) is linked at N47. The next 4 helical transmembrane spans lie at 62-82 (ILLQ…VLSI), 89-109 (VHPF…FRFL), 144-164 (LNWS…LVAY), and 179-199 (WWAW…FYYY). The region spanning 189–335 (LYPIILDFYY…TRIWDRLFGT (147 aa)) is the Fatty acid hydroxylase domain.

This sequence belongs to the sterol desaturase family. TMEM195 subfamily.

It is found in the membrane. The protein operates within secondary metabolite biosynthesis. Fatty acid hydroxylase; part of the gene cluster that mediates the biosynthesis of verlamelin, a lipopeptide that exhibits antifungal activity against plant pathogenic fungi. Verlamelin is a cyclic hexadepsipeptide and is bridged by ester bonding between a 5-hydroxytetradecanoic acid moiety and a carboxyl group on the terminal Val of amide-bonded tetradecanoyl-hexapeptide D-allo-Thr-D-Ala-L-Pro-L-Gln-D-Tyr-L-Val. VlmA and vlmB are altogether regarded as essential components in the biosynthesis of 5-hydroxytetradecanoic acid. VlmA catalyzes the hydroxylation at position C5 of tetradecanoic acid produced in primary metabolism, while the precise function of vlmB still remains to be solved. To be loaded onto the waiting NRPS, 5-hydroxytetradecanoic acid is activated in the form of acyladenylate by the AMP-dependent ligase vlmC. VlmS seems to accept the fatty-acyl intermediate onto the initial module to further elongate amino acid residues by the downstream modules. In addition, in the last module at its C-terminus, vlmS contains a surplus condensation (C) domain that may be involved in cyclization, the last step to form verlamelin. This is Fatty acid hydroxylase vlmA from Lecanicillium sp.